Consider the following 554-residue polypeptide: Phenylalanine--tRNA ligase beta subunit (554 aa).

In terms of domain architecture, B5 spans 276-351 (LTPKSRIISV…INYGYEKFDG (76 aa)). 4 residues coordinate Mg(2+): Asp-329, Asp-335, Glu-338, and Glu-339.

The protein belongs to the phenylalanyl-tRNA synthetase beta subunit family. Type 2 subfamily. Tetramer of two alpha and two beta subunits. Requires Mg(2+) as cofactor.

It localises to the cytoplasm. The catalysed reaction is tRNA(Phe) + L-phenylalanine + ATP = L-phenylalanyl-tRNA(Phe) + AMP + diphosphate + H(+). This is Phenylalanine--tRNA ligase beta subunit from Methanococcus maripaludis (strain DSM 14266 / JCM 13030 / NBRC 101832 / S2 / LL).